Here is a 1374-residue protein sequence, read N- to C-terminus: Y' element ATP-dependent helicase YML133C (1374 aa).

The Helicase ATP-binding domain occupies Glu-375–Ala-552. Ala-388–Thr-395 contacts ATP. The 150-residue stretch at Lys-609–Gly-758 folds into the Helicase C-terminal domain. Over residues Ala-832 to Ser-975 the composition is skewed to low complexity. The interval Ala-832–Lys-999 is disordered. Residues Ala-976–Lys-999 show a composition bias toward basic and acidic residues.

This sequence belongs to the helicase family. Yeast subtelomeric Y' repeat subfamily.

Functionally, catalyzes DNA unwinding and is involved in telomerase-independent telomere maintenance. The chain is Y' element ATP-dependent helicase YML133C from Saccharomyces cerevisiae (strain ATCC 204508 / S288c) (Baker's yeast).